Consider the following 230-residue polypeptide: Small ribosomal subunit protein uS3 (230 aa).

The region spanning 39-107 is the KH type-2 domain; that stretch reads VRKFLVEKLQ…PAQINIAEIR (69 aa).

Belongs to the universal ribosomal protein uS3 family. Part of the 30S ribosomal subunit. Forms a tight complex with proteins S10 and S14.

Its function is as follows. Binds the lower part of the 30S subunit head. Binds mRNA in the 70S ribosome, positioning it for translation. The chain is Small ribosomal subunit protein uS3 from Shewanella baltica (strain OS223).